The chain runs to 643 residues: Very long-chain fatty acid transport protein (643 aa).

At 1–15 the chain is on the cytoplasmic side; sequence MACMHQAQLYNDLEE. Residues 16–36 traverse the membrane as a helical segment; it reads LLTGPSVPIVAGAAGAAALTA. Residues 37–138 lie on the Extracellular side of the membrane; the sequence is YINAKYHIAH…AIDGGNSAEH (102 aa). Residues 139–159 form a helical membrane-spanning segment; the sequence is LMLWLALDAIGAATSFLNWNL. At 160 to 249 the chain is on the cytoplasmic side; sequence TGAGLIHCIK…TGLPKGVFIS (90 aa). 235-246 lines the ATP pocket; sequence YTSGTTGLPKGV. An intramembrane segment occupies 250–318; it reads TGRELRTDWS…FWPEVVASEA (69 aa). The Cytoplasmic portion of the chain corresponds to 319-643; it reads NIIQYVGELG…QGIVDKRIRL (325 aa). Positions 477–525 match the FACS motif; it reads DLWFKSGDMLRQDAEGRVYFVDRLGDTFRWKSENVSTNEVADVMGTFPQ.

This sequence belongs to the ATP-dependent AMP-binding enzyme family.

It is found in the lipid droplet. The protein localises to the cell membrane. The protein resides in the peroxisome membrane. Its subcellular location is the peroxisome. It catalyses the reaction a very long-chain fatty acid + ATP + CoA = a very long-chain fatty acyl-CoA + AMP + diphosphate. In terms of biological role, acyl-CoA synthetase required for both the import of long chain fatty acids (LCFAs) (C14-C18) and the activation very long chain fatty acids (VLCFAs) (C20-C26) by esterification of the fatty acids into metabolically active CoA-thioesters for subsequent degradation or incorporation into phospholipids. The transport and fatty acyl-CoA synthetase activities are genetically separable and are thus independent activities. Esterifies VLCFAs in the peroxisome matrix. The VLCFAs are actively transported into peroxisomes by a PXA1-PXA2 heterodimeric transporter in the peroxisomal membrane. This Cochliobolus heterostrophus (Southern corn leaf blight fungus) protein is Very long-chain fatty acid transport protein (FAT1).